A 94-amino-acid polypeptide reads, in one-letter code: uncharacterized protein (94 aa).

This is an uncharacterized protein from Helicobacter pylori (strain ATCC 700392 / 26695) (Campylobacter pylori).